The following is a 325-amino-acid chain: Fe-S cluster assembly protein DRE2 (325 aa).

Positions 1–169 (MTLGDRLGLI…KKKDAGNNEQ (169 aa)) are N-terminal SAM-like domain. A linker region spans residues 170 to 222 (VVKLSVEDVEDDLDDDPEVSNELLSKAKFFNSLSLNQDAEIDENNLIKSTDGD). Residues C229, C240, C243, and C245 each coordinate [2Fe-2S] cluster. A fe-S binding site A region spans residues 229–245 (CGKTNTKKRRACKDCTC). 4 residues coordinate [4Fe-4S] cluster: C288, C291, C299, and C302. Short sequence motifs (cx2C motif) lie at residues 288–291 (CGSC) and 299–302 (CSGC). Residues 288–302 (CGSCSLGDAFRCSGC) form a fe-S binding site B region.

This sequence belongs to the anamorsin family. As to quaternary structure, monomer. Interacts with TAH18. Interacts with MIA40. It depends on [2Fe-2S] cluster as a cofactor. The cofactor is [4Fe-4S] cluster.

It localises to the cytoplasm. It is found in the mitochondrion intermembrane space. In terms of biological role, component of the cytosolic iron-sulfur (Fe-S) protein assembly (CIA) machinery required for the maturation of extramitochondrial Fe-S proteins. Part of an electron transfer chain functioning in an early step of cytosolic Fe-S biogenesis, facilitating the de novo assembly of a [4Fe-4S] cluster on the scaffold complex CFD1-NBP35. Electrons are transferred to DRE2 from NADPH via the FAD- and FMN-containing protein TAH18. TAH18-DRE2 are also required for the assembly of the diferric tyrosyl radical cofactor of ribonucleotide reductase (RNR), probably by providing electrons for reduction during radical cofactor maturation in the catalytic small subunit RNR2. The protein is Fe-S cluster assembly protein DRE2 of Vanderwaltozyma polyspora (strain ATCC 22028 / DSM 70294 / BCRC 21397 / CBS 2163 / NBRC 10782 / NRRL Y-8283 / UCD 57-17) (Kluyveromyces polysporus).